Here is a 111-residue protein sequence, read N- to C-terminus: Protein YibV (111 aa).

This is Protein YibV (yibV) from Escherichia coli O157:H7.